The chain runs to 646 residues: Lipoteichoic acid synthase (646 aa).

Over 1-7 (MSSQKKK) the chain is Cytoplasmic. The helical transmembrane segment at 8-28 (ISLFAFFLLTVITITLKTYFS) threads the bilayer. The Extracellular portion of the chain corresponds to 29 to 43 (YYVDFSLGVKGLVQN). The chain crosses the membrane as a helical span at residues 44–64 (LILLMNPYSLVALVLSVFLFF). Residues 65 to 68 (KGKK) lie on the Cytoplasmic side of the membrane. A helical transmembrane segment spans residues 69-89 (AFWFMFIGGFLLTFLLYANVV). Residues 90 to 119 (YFRFFSDFLTFSTLNQVGNVESMGGAVSAS) are Extracellular-facing. Residues 120-140 (FKWYDFVYFIDTLVYLFILIF) traverse the membrane as a helical segment. Residues 141–153 (KTKWLDTKAFSKK) are Cytoplasmic-facing. Residues 154–174 (FVPVVMAASVALFFLNLAFAE) traverse the membrane as a helical segment. Over 175–646 (TDRPELLTRT…ETGPKANSKK (472 aa)) the chain is Extracellular. Mn(2+) is bound by residues glutamate 255 and threonine 300. Threonine 300 is an active-site residue. Histidine 416 is a substrate binding site. 2 residues coordinate Mn(2+): aspartate 475 and histidine 476. Residues 623-638 (NPDFKKVNPSKYKYET) are compositionally biased toward basic and acidic residues. A disordered region spans residues 623 to 646 (NPDFKKVNPSKYKYETGPKANSKK).

Belongs to the LTA synthase family. Proteolytically cleaved.

Its subcellular location is the cell membrane. The protein resides in the secreted. It participates in cell wall biogenesis; lipoteichoic acid biosynthesis. Catalyzes the polymerization of lipoteichoic acid (LTA) polyglycerol phosphate, a reaction that presumably uses phosphatidylglycerol (PG) as substrate. Is required for staphylococcal growth and cell division process. This Staphylococcus aureus (strain bovine RF122 / ET3-1) protein is Lipoteichoic acid synthase (ltaS).